The following is a 550-amino-acid chain: Hydroxylamine reductase (550 aa).

Residues cysteine 3, cysteine 6, cysteine 18, and cysteine 25 each coordinate [2Fe-2S] cluster. Histidine 249, glutamate 273, cysteine 317, cysteine 405, cysteine 433, cysteine 458, glutamate 492, and lysine 494 together coordinate hybrid [4Fe-2O-2S] cluster. Cysteine 405 is modified (cysteine persulfide).

Belongs to the HCP family. The cofactor is [2Fe-2S] cluster. It depends on hybrid [4Fe-2O-2S] cluster as a cofactor.

It is found in the cytoplasm. The enzyme catalyses A + NH4(+) + H2O = hydroxylamine + AH2 + H(+). Catalyzes the reduction of hydroxylamine to form NH(3) and H(2)O. The chain is Hydroxylamine reductase from Salmonella agona (strain SL483).